The sequence spans 89 residues: Acylphosphatase (89 aa).

The region spanning 3-89 (ALFIKISGRV…QNFTSFDIVP (87 aa)) is the Acylphosphatase-like domain. Active-site residues include Arg-18 and Asn-36.

Belongs to the acylphosphatase family.

It carries out the reaction an acyl phosphate + H2O = a carboxylate + phosphate + H(+). The chain is Acylphosphatase (acyP) from Pseudothermotoga lettingae (strain ATCC BAA-301 / DSM 14385 / NBRC 107922 / TMO) (Thermotoga lettingae).